Here is a 369-residue protein sequence, read N- to C-terminus: Nuclear pore complex-interacting protein family member A7 (369 aa).

The tract at residues 151 to 171 (SMKEREHREEERQVSEAEENG) is disordered.

This sequence belongs to the NPIP family.

The sequence is that of Nuclear pore complex-interacting protein family member A7 (NPIPA7) from Homo sapiens (Human).